We begin with the raw amino-acid sequence, 576 residues long: Laccase-1 (576 aa).

An N-terminal signal peptide occupies residues 1 to 19 (MARTTFLVSVSLFVSAVLA). Plastocyanin-like domains follow at residues 21–145 (TVEY…LVIY) and 157–304 (VDDE…LVYE). N41 is a glycosylation site (N-linked (GlcNAc...) asparagine). Cu cation contacts are provided by H82, H84, H127, and H129. Cysteines 103 and 562 form a disulfide. 4 N-linked (GlcNAc...) asparagine glycosylation sites follow: N182, N228, N294, and N368. The region spanning 376-576 (DESKLVPLEY…NWLKSNPGQL (201 aa)) is the Plastocyanin-like 3 domain. Positions 471, 474, 476, 523, 524, 525, and 529 each coordinate Cu cation.

It belongs to the multicopper oxidase family. In terms of assembly, homodimer. Cu cation serves as cofactor. In mycelia, at a lower level than LCC4.

The protein localises to the secreted. It catalyses the reaction 4 hydroquinone + O2 = 4 benzosemiquinone + 2 H2O. Lignin degradation and detoxification of lignin-derived products. The chain is Laccase-1 (LCC1) from Thanatephorus cucumeris (Black scurf of potato).